Consider the following 350-residue polypeptide: tRNA uridine(34) hydroxylase (350 aa).

Residues 146 to 240 (DDPDAVFIDM…YARRAREQGL (95 aa)) enclose the Rhodanese domain. Residue cysteine 200 is the Cysteine persulfide intermediate of the active site. Over residues 319 to 328 (RRRRAGRENG) the composition is skewed to basic and acidic residues. Residues 319-350 (RRRRAGRENGNKIFNKSRGRLNSKLSIPDPAE) form a disordered region.

The protein belongs to the TrhO family.

The enzyme catalyses uridine(34) in tRNA + AH2 + O2 = 5-hydroxyuridine(34) in tRNA + A + H2O. In terms of biological role, catalyzes oxygen-dependent 5-hydroxyuridine (ho5U) modification at position 34 in tRNAs. The polypeptide is tRNA uridine(34) hydroxylase (Salmonella typhi).